We begin with the raw amino-acid sequence, 320 residues long: Malate dehydrogenase (320 aa).

NAD(+)-binding positions include 10 to 15 and aspartate 34; that span reads GAGNIG. Arginine 83 and arginine 89 together coordinate substrate. NAD(+)-binding positions include asparagine 96 and 119–121; that span reads ITN. Asparagine 121 and arginine 152 together coordinate substrate. Histidine 176 acts as the Proton acceptor in catalysis.

This sequence belongs to the LDH/MDH superfamily. MDH type 3 family.

The enzyme catalyses (S)-malate + NAD(+) = oxaloacetate + NADH + H(+). Functionally, catalyzes the reversible oxidation of malate to oxaloacetate. The chain is Malate dehydrogenase from Rhizorhabdus wittichii (strain DSM 6014 / CCUG 31198 / JCM 15750 / NBRC 105917 / EY 4224 / RW1) (Sphingomonas wittichii).